The following is a 47-amino-acid chain: uncharacterized protein (47 aa).

The chain crosses the membrane as a helical span at residues 28–45 (VMIWGCLPYFLYVLIRMF).

It is found in the cell membrane. This is an uncharacterized protein from Bacillus subtilis (strain 168).